The following is a 120-amino-acid chain: Spermidine export protein MdtJ (120 aa).

The next 4 membrane-spanning stretches (helical) occupy residues 1 to 21, 31 to 51, 54 to 74, and 81 to 101; these read MFYWILLALAIATEITGTLSM, AGFILMLVMITLSYIFLSFAV, IALGVAYALWEGIGILFITIF, and EALSTMKIAGLLTLVAGIVLI.

It belongs to the drug/metabolite transporter (DMT) superfamily. Small multidrug resistance (SMR) (TC 2.A.7.1) family. MdtJ subfamily. In terms of assembly, forms a complex with MdtI.

The protein localises to the cell inner membrane. Its function is as follows. Catalyzes the excretion of spermidine. This is Spermidine export protein MdtJ from Salmonella agona (strain SL483).